The following is a 291-amino-acid chain: Undecaprenyl-diphosphatase (291 aa).

8 consecutive transmembrane segments (helical) span residues 1–21, 48–68, 102–122, 126–146, 162–182, 203–223, 231–251, and 267–287; these read MFII…LTEF, SAFT…AWVF, LHVL…DDFI, LFSV…MIIA, ISYF…WPGF, SDFT…LSLL, IADI…GLIA, and FAIY…GFGI.

Belongs to the UppP family.

It localises to the cell membrane. It carries out the reaction di-trans,octa-cis-undecaprenyl diphosphate + H2O = di-trans,octa-cis-undecaprenyl phosphate + phosphate + H(+). Functionally, catalyzes the dephosphorylation of undecaprenyl diphosphate (UPP). Confers resistance to bacitracin. The polypeptide is Undecaprenyl-diphosphatase (Staphylococcus aureus (strain COL)).